The sequence spans 236 residues: MTKVCAVFGGSRGIGKAVSKLLAQRDYKVAVISRDLEVAKAAAAEVGAHLALSCDVSKENEIQDTFKEITNNLGNVDYLVNSAGIRRDALLLRTRSEDIRSLLSVNLVGTIQTCKLALRSMIQQQGGAIVNIGSIVGHKGNIGQSIYGASKEGLIGFSKSLAKEVAKRNIRVNVVAPGFIHTDMTLGLEEDSLTKMVPLGRFGDPEEVAQSVLFLLESPYITGHVLVVDGGLQLQM.

Residues 11 to 14 (SRGI), 34 to 35 (RD), D55, and 82 to 84 (SAG) each bind NADP(+). S134 contributes to the substrate binding site. NADP(+) is bound by residues Y147, K151, and 180–182 (IHT). Catalysis depends on Y147, which acts as the Proton acceptor.

It belongs to the short-chain dehydrogenases/reductases (SDR) family. Homotetramer (in vitro). Heterotetramer with HSD17B8; contains two molecules each of HSD17B8 and CBR4.

The protein resides in the mitochondrion matrix. Its pathway is lipid metabolism; fatty acid biosynthesis. In terms of biological role, the heterotetramer with HSD17B8 has NADH-dependent 3-ketoacyl-acyl carrier protein reductase activity, and thereby plays a role in mitochondrial fatty acid biosynthesis. Within the heterotetramer, HSD17B8 binds NADH; CBR4 binds NADPD. The homotetramer has NADPH-dependent quinone reductase activity. Both homotetramer and the heterotetramer have broad in vitro substrate specificity and can reduce 9,10-phenanthrenequinone, 1,4-benzoquinone and various other o-quinones and p-quinones. This is Carbonyl reductase family member 4 (cbr4) from Xenopus tropicalis (Western clawed frog).